Here is a 145-residue protein sequence, read N- to C-terminus: ATP synthase epsilon chain (145 aa).

Belongs to the ATPase epsilon chain family. F-type ATPases have 2 components, CF(1) - the catalytic core - and CF(0) - the membrane proton channel. CF(1) has five subunits: alpha(3), beta(3), gamma(1), delta(1), epsilon(1). CF(0) has three main subunits: a, b and c.

The protein resides in the cell inner membrane. Its function is as follows. Produces ATP from ADP in the presence of a proton gradient across the membrane. The sequence is that of ATP synthase epsilon chain from Francisella tularensis subsp. holarctica (strain FTNF002-00 / FTA).